The following is a 166-amino-acid chain: Large ribosomal subunit protein uL10 (166 aa).

Belongs to the universal ribosomal protein uL10 family. Part of the ribosomal stalk of the 50S ribosomal subunit. The N-terminus interacts with L11 and the large rRNA to form the base of the stalk. The C-terminus forms an elongated spine to which L12 dimers bind in a sequential fashion forming a multimeric L10(L12)X complex.

Its function is as follows. Forms part of the ribosomal stalk, playing a central role in the interaction of the ribosome with GTP-bound translation factors. This Staphylococcus haemolyticus (strain JCSC1435) protein is Large ribosomal subunit protein uL10.